The sequence spans 298 residues: Putative olfactory receptor 10D4 (298 aa).

Over 1 to 23 (MRNHTMVTEFILLGIPETEGLET) the chain is Extracellular. N-linked (GlcNAc...) asparagine glycosylation is present at N3. A helical membrane pass occupies residues 24-44 (ALLFLFSSFYLCTLLGNVLIL). The Cytoplasmic segment spans residues 45–52 (TAIISSTR). The helical transmembrane segment at 53 to 73 (LHTPMYFFLGNLSIFDLGFSS) threads the bilayer. At 74–97 (TTVPKMLFYLSGNSHAISYAGCVS) the chain is on the extracellular side. A disulfide bond links C95 and C187. A helical membrane pass occupies residues 98–118 (QLFFYHFLGCTECFLYTVMAC). Over 119 to 137 (DRFVAICFPLRYTVIMNHR) the chain is Cytoplasmic. The chain crosses the membrane as a helical span at residues 138 to 158 (VCFMLATGTWMIGCVHAMILT). Topologically, residues 159 to 195 (PLTFQLPYCGPNKVGYYFCDIPAVLPLACKDTSLAQR) are extracellular. The chain crosses the membrane as a helical span at residues 196 to 215 (VGFTNVGLLSLICFFLILVS). Residues 216 to 235 (YTCIGISISKIRSAEGRQRA) lie on the Cytoplasmic side of the membrane. Residues 236–256 (FSTCSAHLTAILCAYGPVIVI) form a helical membrane-spanning segment. At 257-267 (YLQPNPSALLG) the chain is on the extracellular side. Residues 268 to 288 (SIIQILNNLVTPMLNPLIYSL) traverse the membrane as a helical segment. Residues 289–298 (RNKDVKSDQP) are Cytoplasmic-facing.

The protein belongs to the G-protein coupled receptor 1 family.

The protein localises to the cell membrane. Functionally, odorant receptor. The sequence is that of Putative olfactory receptor 10D4 (OR10D4P) from Homo sapiens (Human).